The following is a 185-amino-acid chain: Elongation factor P 1 (185 aa).

It belongs to the elongation factor P family.

The protein resides in the cytoplasm. The protein operates within protein biosynthesis; polypeptide chain elongation. Involved in peptide bond synthesis. Stimulates efficient translation and peptide-bond synthesis on native or reconstituted 70S ribosomes in vitro. Probably functions indirectly by altering the affinity of the ribosome for aminoacyl-tRNA, thus increasing their reactivity as acceptors for peptidyl transferase. This Chlamydia caviae (strain ATCC VR-813 / DSM 19441 / 03DC25 / GPIC) (Chlamydophila caviae) protein is Elongation factor P 1 (efp1).